A 446-amino-acid chain; its full sequence is Oxysterols receptor LXR-beta (446 aa).

Residues 1 to 69 (MSSPTSSLDT…PERKRKKGPA (69 aa)) form a disordered region. The tract at residues 1–76 (MSSPTSSLDT…GPAPKMLGHE (76 aa)) is transactivation AF-1; required for ligand-independent transactivation function. The span at 17–28 (SPQPSTSATSPT) shows a compositional bias: low complexity. The nuclear receptor DNA-binding region spans 75 to 152 (HELCRVCGDK…AGMREQCVLS (78 aa)). 2 consecutive NR C4-type zinc fingers follow at residues 78-98 (CRVC…CEGC) and 116-140 (CRGS…LRKC). Residues 159–201 (KRIQKQQQQQPPPPSEPAASSSGRPAASPGTSEASSQGSGEGE) form a disordered region. A compositionally biased stretch (low complexity) spans 175–196 (PAASSSGRPAASPGTSEASSQG). The tract at residues 205–446 (LTAAQELMIQ…LLSEIWDVHE (242 aa)) is transactivation AF-2; required for ligand-dependent transactivation function; mediates interaction with CCAR2. Positions 208 to 446 (AQELMIQQLV…LLSEIWDVHE (239 aa)) constitute an NR LBD domain. Glycyl lysine isopeptide (Lys-Gly) (interchain with G-Cter in SUMO2) cross-links involve residues lysine 395 and lysine 433.

It belongs to the nuclear hormone receptor family. NR1 subfamily. In terms of assembly, forms a heterodimer with RXR. Interacts with CCAR2 (via N-terminus) in a ligand-independent manner. Interacts (when sumoylated) with GPS2; interaction with GPS2 onto hepatic acute phase protein promoters prevents N-Cor corepressor complex dissociation. Interacts with ABCA12 and ABCA1; this interaction is required for ABCA1 localization to the cell surface and is necessary for its normal activity and stability. Sumoylated by SUMO2 at Lys-395 and Lys-433 during the hepatic acute phase response, leading to promote interaction with GPS2 and prevent N-Cor corepressor complex dissociation. In terms of tissue distribution, ubiquitous.

The protein localises to the nucleus. In terms of biological role, nuclear receptor that exhibits a ligand-dependent transcriptional activation activity. Binds preferentially to double-stranded oligonucleotide direct repeats having the consensus half-site sequence 5'-AGGTCA-3' and 4-nt spacing (DR-4). Regulates cholesterol uptake through MYLIP-dependent ubiquitination of LDLR, VLDLR and LRP8; DLDLR and LRP8. Interplays functionally with RORA for the regulation of genes involved in liver metabolism. Induces LPCAT3-dependent phospholipid remodeling in endoplasmic reticulum (ER) membranes of hepatocytes, driving SREBF1 processing and lipogenesis. Via LPCAT3, triggers the incorporation of arachidonate into phosphatidylcholines of ER membranes, increasing membrane dynamics and enabling triacylglycerols transfer to nascent very low-density lipoprotein (VLDL) particles. Via LPCAT3 also counteracts lipid-induced ER stress response and inflammation, likely by modulating SRC kinase membrane compartmentalization and limiting the synthesis of lipid inflammatory mediators. Plays an anti-inflammatory role during the hepatic acute phase response by acting as a corepressor: inhibits the hepatic acute phase response by preventing dissociation of the N-Cor corepressor complex. This chain is Oxysterols receptor LXR-beta (Nr1h2), found in Mus musculus (Mouse).